A 661-amino-acid polypeptide reads, in one-letter code: UvrABC system protein B (661 aa).

The Helicase ATP-binding domain occupies 25–414 (AGLNSKKRSQ…DTVVELIIRP (390 aa)). Residue 38 to 45 (GITGSGKT) participates in ATP binding. Residues 91-114 (YYDYYQPEAYIARTDTFIEKDSSI) carry the Beta-hairpin motif. The Helicase C-terminal domain maps to 430 to 592 (QVEDLIGEIQ…IIPKTINRAI (163 aa)). The region spanning 621–656 (KAHIEKLKKDMLKAASNLEFEQAAKLRDQLKTLEEA) is the UVR domain.

It belongs to the UvrB family. As to quaternary structure, forms a heterotetramer with UvrA during the search for lesions. Interacts with UvrC in an incision complex.

The protein resides in the cytoplasm. Functionally, the UvrABC repair system catalyzes the recognition and processing of DNA lesions. A damage recognition complex composed of 2 UvrA and 2 UvrB subunits scans DNA for abnormalities. Upon binding of the UvrA(2)B(2) complex to a putative damaged site, the DNA wraps around one UvrB monomer. DNA wrap is dependent on ATP binding by UvrB and probably causes local melting of the DNA helix, facilitating insertion of UvrB beta-hairpin between the DNA strands. Then UvrB probes one DNA strand for the presence of a lesion. If a lesion is found the UvrA subunits dissociate and the UvrB-DNA preincision complex is formed. This complex is subsequently bound by UvrC and the second UvrB is released. If no lesion is found, the DNA wraps around the other UvrB subunit that will check the other stand for damage. The chain is UvrABC system protein B from Rickettsia felis (strain ATCC VR-1525 / URRWXCal2) (Rickettsia azadi).